The primary structure comprises 108 residues: uncharacterized protein (108 aa).

This is an uncharacterized protein from Acanthamoeba polyphaga (Amoeba).